The sequence spans 425 residues: Tyrosine--tRNA ligase (425 aa).

Tyr-33 provides a ligand contact to L-tyrosine. The 'HIGH' region motif lies at 38–47 (PTADSLHLGN). Tyr-170 and Gln-174 together coordinate L-tyrosine. Residues 230-234 (KFGKS) carry the 'KMSKS' region motif. Position 233 (Lys-233) interacts with ATP. The 67-residue stretch at 356-422 (KKLIDLLVET…GKKNKMIIRL (67 aa)) folds into the S4 RNA-binding domain.

The protein belongs to the class-I aminoacyl-tRNA synthetase family. TyrS type 1 subfamily. In terms of assembly, homodimer.

It localises to the cytoplasm. The catalysed reaction is tRNA(Tyr) + L-tyrosine + ATP = L-tyrosyl-tRNA(Tyr) + AMP + diphosphate + H(+). In terms of biological role, catalyzes the attachment of tyrosine to tRNA(Tyr) in a two-step reaction: tyrosine is first activated by ATP to form Tyr-AMP and then transferred to the acceptor end of tRNA(Tyr). The chain is Tyrosine--tRNA ligase from Protochlamydia amoebophila (strain UWE25).